The sequence spans 39 residues: Contryphan-Cal1 (39 aa).

The N-terminal stretch at 1–20 is a signal peptide; it reads MTRTAVLLLTLLFLVAMAAS. Cysteines 29 and 35 form a disulfide.

As to expression, expressed by the venom duct.

Its subcellular location is the secreted. Probable neurotoxin. The sequence is that of Contryphan-Cal1 from Californiconus californicus (California cone).